We begin with the raw amino-acid sequence, 235 residues long: Probable membrane-associated kinase regulator 6 (235 aa).

The interval 108–140 (SAATEEESEPLDTTTSEKIDTRGLNSKPSPTSS) is disordered. Over residues 130–140 (GLNSKPSPTSS) the composition is skewed to polar residues.

It is found in the cell membrane. Its function is as follows. May be involved in abscisic acid signaling by acting as a kinase regulator. The chain is Probable membrane-associated kinase regulator 6 (MAKR6) from Arabidopsis thaliana (Mouse-ear cress).